Here is a 562-residue protein sequence, read N- to C-terminus: Potassium-transporting ATPase potassium-binding subunit (562 aa).

12 helical membrane passes run 6-26 (FLLIASFMLVLLLLARPLGSF), 62-82 (YALAILWFNLLGLALLFALLM), 132-152 (GLAVQNFLSAATGIAVAFALI), 170-190 (VFRITLYVLLPISLLIALFFV), 253-273 (FVQMLAIFLIPCALCFSFGQV), 283-303 (LIWAMSLIFVVAVVVVMYAEL), 327-347 (FGILATSMFSVVTTAASCGAV), 356-376 (ALGGMVPMWLMQIGEVVFGGV), 379-399 (GLYGMLLFVLLTVFIAGLMIG), 416-436 (MTALAILVTPTLVLLGSALAI), 483-503 (LLLAFAMFVGRFGVILPVLAI), and 526-546 (LFIGLLVGTVLLVGALTFVPA).

This sequence belongs to the KdpA family. In terms of assembly, the system is composed of three essential subunits: KdpA, KdpB and KdpC.

The protein localises to the cell inner membrane. Functionally, part of the high-affinity ATP-driven potassium transport (or Kdp) system, which catalyzes the hydrolysis of ATP coupled with the electrogenic transport of potassium into the cytoplasm. This subunit binds the periplasmic potassium ions and delivers the ions to the membrane domain of KdpB through an intramembrane tunnel. The chain is Potassium-transporting ATPase potassium-binding subunit from Serratia proteamaculans (strain 568).